The chain runs to 171 residues: Myelin basic protein (171 aa).

A1 is subject to N-acetylalanine. Residues 1-12 (ASQKRPSQRHGS) are compositionally biased toward basic residues. The segment at 1 to 171 (ASQKRPSQRH…SRSGSPMARR (171 aa)) is disordered. Phosphoserine is present on residues S7 and S12. Y14 carries the phosphotyrosine modification. A Phosphoserine modification is found at S19. The residue at position 20 (T20) is a Phosphothreonine. 2 positions are modified to citrulline: R25 and R31. At T35 the chain carries Phosphothreonine. A Phosphoserine modification is found at S39. 2 positions are modified to omega-N-methylarginine: R42 and R48. Phosphoserine is present on S55. The residue at position 66 (T66) is a Phosphothreonine. Residue Y68 is modified to Phosphotyrosine. A phosphothreonine mark is found at T95 and T98. A Deamidated glutamine modification is found at Q103. R107 is subject to Omega-N-methylarginine; alternate. R107 is subject to Symmetric dimethylarginine; alternate. S115 bears the Phosphoserine mark. Position 122 is an N6-acetyllysine (K122). A Citrulline modification is found at R130. At Q148 the chain carries Deamidated glutamine. At R160 the chain carries Citrulline. S162 carries the post-translational modification Phosphoserine. S166 carries the phosphoserine; by UHMK1 modification. The residue at position 171 (R171) is a Citrulline.

This sequence belongs to the myelin basic protein family. As to quaternary structure, homodimer. As in other animals, several charge isomers may be produced as a result of optional post-translational modifications, such as phosphorylation of serine or threonine residues, deamidation of glutamine or asparagine residues, citrullination and methylation of arginine residues. Post-translationally, phosphorylated by TAOK2, VRK2, MAPK11, MAPK12, MAPK14 and MINK1. In terms of processing, proteolytically cleaved in B cell lysosomes by cathepsin CTSG which degrades the major immunogenic MBP epitope and prevents the activation of MBP-specific autoreactive T cells.

The protein localises to the myelin membrane. Is, with PLP, the most abundant protein component of the myelin membrane in the CNS. Has a role in both the formation and stabilization of this compact multilayer arrangement of bilayers. Each splice variant and charge isomer may have a specialized function in the assembly of an optimized, biochemically functional myelin membrane. The sequence is that of Myelin basic protein (MBP) from Sus scrofa (Pig).